The primary structure comprises 268 residues: Microtubule-associated protein RP/EB family member 1 (268 aa).

An N-acetylalanine modification is found at alanine 2. Positions 14–116 (NLSRHDMLAW…FVQWFKKFFD (103 aa)) constitute a Calponin-homology (CH) domain. Lysine 66 carries the post-translational modification N6-crotonyllysine. Tyrosine 124 is modified (phosphotyrosine). The interval 124–268 (YDPVAARQGQ…GGPQEEQEEY (145 aa)) is interaction with MTUS2/TIP150. Positions 146–187 (LNKPKKPLTSSSAAPQRPISTQRTAAAPKAGPGVVRKNPGVG) are disordered. Positions 153 to 169 (LTSSSAAPQRPISTQRT) are enriched in polar residues. 2 positions are modified to phosphoserine: serine 155 and serine 165. The EB1 C-terminal domain occupies 185–255 (GVGNGDDEAA…LYATDEGFVI (71 aa)). An interaction with CDK5RAP2 region spans residues 185 to 268 (GVGNGDDEAA…GGPQEEQEEY (84 aa)). The interval 206–211 (TVEDLE) is interaction with APC. The DCTN1-binding stretch occupies residues 208-268 (EDLEKERDFY…GGPQEEQEEY (61 aa)). N6-acetyllysine is present on lysine 220. Positions 220-242 (KLRNIELICQENEGENDPVLQRI) are APC-binding. The interaction with SKA1 stretch occupies residues 232-255 (EGENDPVLQRIVDILYATDEGFVI).

This sequence belongs to the MAPRE family. Homodimer. Heterodimer with MAPRE3. Interacts with DCTN1, DCTN2, TERF1 and dynein intermediate chain. Interaction with DIAPH1 and DIAPH2. Interacts (via C-terminal residues 206-211) with APC (via C-terminal residues 2674-2843); the interaction inhibits association with and bundling of F-actin. Interacts with CLASP2, DST, KIF2C and STIM1; probably required for their targeting to the growing microtubule plus ends. Interacts with MTUS2; interaction is direct and probably targets MTUS2 to microtubules. Interacts (via C-terminus) with SKA1 (via SXIP motif); the interaction is direct and stabilizes the kinetochore-microtubule attachment of the SKA1 complex. Interacts with APC2. Interacts with CLASP1. Interacts with CDK5RAP2. Interacts with MACF1. Interacts with RABL2/RABL2A; binds preferentially to GTP-bound RABL2. Interacts with KCNAB2. Interacts (via C-terminus) with CLIP1. Interacts with SLAIN2 and SLAIN1. Interacts with KIF18B; this interaction is required for efficient accumulation of KIF18B at microtubule plus ends. Interacts with MISP. Interacts with KNSTRN. Interacts with NCKAP5L. Interacts with CAMSAP2. Interacts with PDE4DIP isoform 13/MMG8/SMYLE; this interaction is required for its recruitment to the Golgi apparatus. Forms a pericentrosomal complex with AKAP9, CDK5RAP2 and PDE4DIP isoform 13/MMG8/SMYLE; within this complex, MAPRE1 binding to CDK5RAP2 may be mediated by PDE4DIP. Interacts with AKNA. Interacts with GAS2L1, GAS2L2, and GAS2L3. Interacts with RARRES1 and AGBL2. Acetylation at Lys-220 by KAT2B/PCAF promotes dynamic kinetochore-microtubule interactions in early mitosis. In terms of processing, crotonylated by KAT5 during mitosis, promoting astral microtubule plasticity and dynamic connection between astral microtubules and the cortex during mitotic chromosome segregation, thereby ensuring accurate spindle positioning in mitosis. Decrotonylated by HDAC3. Ubiquitously expressed.

Its subcellular location is the cytoplasm. It localises to the cytoskeleton. The protein localises to the microtubule organizing center. It is found in the centrosome. The protein resides in the golgi apparatus. Its subcellular location is the spindle. It localises to the spindle pole. In terms of biological role, plus-end tracking protein (+TIP) that binds to the plus-end of microtubules and regulates the dynamics of the microtubule cytoskeleton. Recruits other +TIP proteins to microtubules by binding to a conserved Ser-X-Leu-Pro (SXLP) motif in their polypeptide chains. Promotes cytoplasmic microtubule nucleation and elongation. Involved in mitotic spindle positioning by stabilizing microtubules and promoting dynamic connection between astral microtubules and the cortex during mitotic chromosome segregation. Assists chromosome alignment in metaphase by recruiting the SKA complex to the spindle and stabilizing its interactions with microtubule bundles (K-fibers). Also acts as a regulator of minus-end microtubule organization: interacts with the complex formed by AKAP9 and PDE4DIP, leading to recruit CAMSAP2 to the Golgi apparatus, thereby tethering non-centrosomal minus-end microtubules to the Golgi, an important step for polarized cell movement. Promotes elongation of CAMSAP2-decorated microtubule stretches on the minus-end of microtubules. Acts as a regulator of autophagosome transport via interaction with CAMSAP2. Functions downstream of Rho GTPases and DIAPH1 in stable microtubule formation. May play a role in cell migration. The polypeptide is Microtubule-associated protein RP/EB family member 1 (Homo sapiens (Human)).